A 288-amino-acid chain; its full sequence is T-cell-interacting, activating receptor on myeloid cells protein 1 (288 aa).

Positions 1–16 (MISRLLSLLCLRLCVG) are cleaved as a signal peptide. Over 17–258 (QTDIPENGSP…EGYTVDNLIR (242 aa)) the chain is Extracellular. 2 Ig-like C2-type domains span residues 27 to 113 (PKPS…HPSN) and 124 to 217 (PQPS…LEIS). Intrachain disulfides connect Cys-49-Cys-97 and Cys-146-Cys-196. 2 N-linked (GlcNAc...) asparagine glycosylation sites follow: Asn-74 and Asn-185. A helical membrane pass occupies residues 259–279 (VGVAAAILLIVGGFLVEAWHS). Residues 280–288 (ERLSPNKPW) lie on the Cytoplasmic side of the membrane.

In terms of assembly, interacts with Fc receptor gamma chain FCER1G. Post-translationally, N-glycosylated. As to expression, expressed in lung, uterus, lymph nodes, spleen, thymus and bone marrow. Expressed in bone marrow CD11b(+)Gr-1(+) granulocyte precursors and mature neutrophils.

The protein localises to the cell membrane. Functionally, may act as receptor. Negatively regulates TCR-mediated CD4(+) T cell proliferation and activation, possibly by binding an unknown ligand on the T cell surface. Enhances Toll-like receptor-mediated production of pro-inflammatory cytokines by macrophages and neutrophils. The sequence is that of T-cell-interacting, activating receptor on myeloid cells protein 1 (Tarm1) from Mus musculus (Mouse).